The chain runs to 176 residues: 3-hydroxydecanoyl-[acyl-carrier-protein] dehydratase (176 aa).

His-75 is an active-site residue.

It belongs to the thioester dehydratase family. FabA subfamily. Homodimer.

It is found in the cytoplasm. It catalyses the reaction a (3R)-hydroxyacyl-[ACP] = a (2E)-enoyl-[ACP] + H2O. The catalysed reaction is (3R)-hydroxydecanoyl-[ACP] = (2E)-decenoyl-[ACP] + H2O. The enzyme catalyses (2E)-decenoyl-[ACP] = (3Z)-decenoyl-[ACP]. It functions in the pathway lipid metabolism; fatty acid biosynthesis. In terms of biological role, necessary for the introduction of cis unsaturation into fatty acids. Catalyzes the dehydration of (3R)-3-hydroxydecanoyl-ACP to E-(2)-decenoyl-ACP and then its isomerization to Z-(3)-decenoyl-ACP. Can catalyze the dehydratase reaction for beta-hydroxyacyl-ACPs with saturated chain lengths up to 16:0, being most active on intermediate chain length. In Haemophilus ducreyi (strain 35000HP / ATCC 700724), this protein is 3-hydroxydecanoyl-[acyl-carrier-protein] dehydratase.